The chain runs to 300 residues: tRNA pseudouridine synthase B (300 aa).

D41 (nucleophile) is an active-site residue.

This sequence belongs to the pseudouridine synthase TruB family. Type 1 subfamily.

The catalysed reaction is uridine(55) in tRNA = pseudouridine(55) in tRNA. Functionally, responsible for synthesis of pseudouridine from uracil-55 in the psi GC loop of transfer RNAs. The chain is tRNA pseudouridine synthase B from Synechococcus sp. (strain WH7803).